Here is a 112-residue protein sequence, read N- to C-terminus: Conotoxin vil14.4 (112 aa).

The N-terminal stretch at 1–22 is a signal peptide; the sequence is MGFRVLVLVVMATTSALPFTFF. Residues 23-85 constitute a propeptide that is removed on maturation; the sequence is EEPGRSPFRP…FAELSVGQRR (63 aa). 2 disulfides stabilise this stretch: Cys91/Cys111 and Cys95/Cys107.

Belongs to the conotoxin R superfamily. As to expression, expressed by the venom duct.

Its subcellular location is the secreted. The chain is Conotoxin vil14.4 from Conus villepinii (Villepin's cone).